The primary structure comprises 694 residues: Phosphatase and actin regulator 4 (694 aa).

Disordered stretches follow at residues 1–354 (MEDP…SPLV) and 375–405 (QDIS…PSRL). Positions 45-54 (KPWKWRKKKS) are enriched in basic residues. Residues 55 to 84 (SDKFKETSEVLERKISMRKPREELVKRGVL) are compositionally biased toward basic and acidic residues. Residues 63–88 (EVLERKISMRKPREELVKRGVLLEDP) form an RPEL 1 repeat. Phosphoserine occurs at positions 116, 118, 129, and 145. Low complexity-rich tracts occupy residues 184–209 (AGST…TAAT) and 231–249 (TLPA…TAPA). The segment covering 250-259 (KQPPIPPPKP) has biased composition (pro residues). Residues Ser264, Ser285, Ser335, and Ser337 each carry the phosphoserine modification. Over residues 329 to 352 (LIIPPSSPSPPLPTHIPPEPPRSP) the composition is skewed to pro residues. Residues 381–392 (EDQKTEVPKKIQ) are compositionally biased toward basic and acidic residues. Ser420 carries the post-translational modification Phosphoserine. Phosphothreonine is present on Thr425. A phosphoserine mark is found at Ser436, Ser446, Ser457, Ser503, Ser505, Ser549, and Ser582. The tract at residues 467–562 (VPDDEEEEQT…TNLNSWPRKS (96 aa)) is disordered. Positions 546 to 559 (SRPSEPETNLNSWP) are enriched in polar residues. 2 RPEL repeats span residues 575 to 600 (NTLI…QPKN) and 613 to 638 (RRLT…RFNE). A disordered region spans residues 589 to 608 (ELEQRNILQPKNEADRQAEK). Phosphoserine is present on Ser620.

This sequence belongs to the phosphatase and actin regulator family. In terms of assembly, binds PPP1CA and actin.

It is found in the cytoplasm. It localises to the cell projection. The protein resides in the lamellipodium. In terms of biological role, regulator of protein phosphatase 1 (PP1) required for neural tube and optic fissure closure, and enteric neural crest cell (ENCCs) migration during development. Acts as an activator of PP1 by interacting with PPP1CA and preventing phosphorylation of PPP1CA at 'Thr-320'. During neural tube closure, localizes to the ventral neural tube and activates PP1, leading to down-regulate cell proliferation within cranial neural tissue and the neural retina. Also acts as a regulator of migration of enteric neural crest cells (ENCCs) by activating PP1, leading to dephosphorylation and subsequent activation of cofilin (COF1 or COF2) and repression of the integrin signaling through the RHO/ROCK pathway. This Mus musculus (Mouse) protein is Phosphatase and actin regulator 4 (Phactr4).